We begin with the raw amino-acid sequence, 343 residues long: Zinc finger protein Gfi-1b (343 aa).

The interval 1–20 is mediates repression of transcription; it reads MPRSFLVKSKKTHTYNQHRY. Residues 1–20 are SNAG domain; that stretch reads MPRSFLVKSKKTHTYNQHRY. The interval 51–77 is disordered; sequence STDPTEKQHTPENVITEEARSDPGDPR. The segment covering 67–77 has biased composition (basic and acidic residues); that stretch reads EEARSDPGDPR. 6 C2H2-type zinc fingers span residues 176 to 199, 205 to 227, 233 to 255, 261 to 283, 289 to 311, and 317 to 340; these read YHCVKCSKVFSTSHGLEVHVRRSH, FVCNICGKSFGHAVSLEQHLNVH, FECKMCGKTFKRSSTLSTHLLIH, YPCQFCGKRFHQKSDMKKHTYIH, HKCQVCGKAFSQSSNLITHSRKH, and FSCDLCCKGFQRKVDLRRHRENQH.

The protein localises to the nucleus. Functionally, essential transcriptional regulator necessary for development and differentiation of erythroid and megakaryocytic lineages. Alters histone methylation by recruiting histone methyltransferase to target genes promoters. Plays a role in heterochromatin formation. The protein is Zinc finger protein Gfi-1b (gfi1b) of Xenopus laevis (African clawed frog).